Consider the following 143-residue polypeptide: Transcription antitermination protein NusB (143 aa).

This sequence belongs to the NusB family.

Involved in transcription antitermination. Required for transcription of ribosomal RNA (rRNA) genes. Binds specifically to the boxA antiterminator sequence of the ribosomal RNA (rrn) operons. In Desulfatibacillum aliphaticivorans, this protein is Transcription antitermination protein NusB.